Here is a 503-residue protein sequence, read N- to C-terminus: Probable cytosol aminopeptidase (503 aa).

Lys274 and Asp279 together coordinate Mn(2+). The active site involves Lys286. Mn(2+) contacts are provided by Asp297, Asp356, and Glu358. Arg360 is a catalytic residue.

Belongs to the peptidase M17 family. The cofactor is Mn(2+).

The protein resides in the cytoplasm. It carries out the reaction Release of an N-terminal amino acid, Xaa-|-Yaa-, in which Xaa is preferably Leu, but may be other amino acids including Pro although not Arg or Lys, and Yaa may be Pro. Amino acid amides and methyl esters are also readily hydrolyzed, but rates on arylamides are exceedingly low.. The enzyme catalyses Release of an N-terminal amino acid, preferentially leucine, but not glutamic or aspartic acids.. In terms of biological role, presumably involved in the processing and regular turnover of intracellular proteins. Catalyzes the removal of unsubstituted N-terminal amino acids from various peptides. The sequence is that of Probable cytosol aminopeptidase from Burkholderia ambifaria (strain ATCC BAA-244 / DSM 16087 / CCUG 44356 / LMG 19182 / AMMD) (Burkholderia cepacia (strain AMMD)).